Consider the following 156-residue polypeptide: MSKITEVVESIALPIVERENMELVDVEFVKEGPDWFLRVYIDKPGGVDLDDCVNINEQLSEKLNETDPIEQAYYLDVSSPGAERPLKKPSDFERAVGKNVYMKTFAPIDGAKEFEGILTAYDGETVVIETRIKTRKKAVSLPVDKIAQARLAVTFS.

Belongs to the RimP family.

It localises to the cytoplasm. Functionally, required for maturation of 30S ribosomal subunits. The chain is Ribosome maturation factor RimP from Exiguobacterium sp. (strain ATCC BAA-1283 / AT1b).